The following is a 207-amino-acid chain: Proteasome subunit beta (207 aa).

Residues 1–7 (MVEAFKG) constitute a propeptide, removed in mature form; by autocatalysis. The active-site Nucleophile is threonine 8.

The protein belongs to the peptidase T1B family. As to quaternary structure, the 20S proteasome core is composed of 14 alpha and 14 beta subunits that assemble into four stacked heptameric rings, resulting in a barrel-shaped structure. The two inner rings, each composed of seven catalytic beta subunits, are sandwiched by two outer rings, each composed of seven alpha subunits. The catalytic chamber with the active sites is on the inside of the barrel. Has a gated structure, the ends of the cylinder being occluded by the N-termini of the alpha-subunits. Is capped at one or both ends by the proteasome regulatory ATPase, PAN.

It is found in the cytoplasm. It catalyses the reaction Cleavage of peptide bonds with very broad specificity.. Its activity is regulated as follows. The formation of the proteasomal ATPase PAN-20S proteasome complex, via the docking of the C-termini of PAN into the intersubunit pockets in the alpha-rings, triggers opening of the gate for substrate entry. Interconversion between the open-gate and close-gate conformations leads to a dynamic regulation of the 20S proteasome proteolysis activity. Component of the proteasome core, a large protease complex with broad specificity involved in protein degradation. The sequence is that of Proteasome subunit beta from Methanothrix thermoacetophila (strain DSM 6194 / JCM 14653 / NBRC 101360 / PT) (Methanosaeta thermophila).